Reading from the N-terminus, the 346-residue chain is Endo-1,4-beta-xylanase B (346 aa).

A signal peptide spans 1–19 (MKGLPALLLLLIGCVSSFG). Positions 41 to 338 (GNNFWSLPDA…KPCYFAIREL (298 aa)) constitute a GH10 domain. Residue E153 is the Proton donor of the active site. E259 acts as the Nucleophile in catalysis.

The protein belongs to the glycosyl hydrolase 10 (cellulase F) family.

It catalyses the reaction Endohydrolysis of (1-&gt;4)-beta-D-xylosidic linkages in xylans.. This chain is Endo-1,4-beta-xylanase B (xynB), found in Thermotoga neapolitana.